The chain runs to 216 residues: Refilin-B (216 aa).

Positions 1–52 (MVGRLSLQDVPELVDTKKKGDGVLDSPDSGLPPSPSPSHWGLAAATGGGGER) are disordered. Residues serine 6 and serine 26 each carry the phosphoserine modification.

This sequence belongs to the Refilin family. As to quaternary structure, interacts with FLNA and FLNB.

Its subcellular location is the cytoplasm. It is found in the cytoskeleton. Its function is as follows. Involved in the regulation of the perinuclear actin network and nuclear shape through interaction with filamins. Plays an essential role in the formation of cartilaginous skeletal elements. This Rattus norvegicus (Rat) protein is Refilin-B.